The chain runs to 449 residues: Signal recognition particle protein (449 aa).

Residues 109 to 116, 191 to 195, and 249 to 252 each bind GTP; these read GLQGSGKT, DTAGR, and SRID.

The protein belongs to the GTP-binding SRP family. SRP54 subfamily. Part of the signal recognition particle protein translocation system, which is composed of SRP and FtsY. SRP is a ribonucleoprotein composed of Ffh and a 4.5S RNA molecule.

The protein localises to the cytoplasm. The catalysed reaction is GTP + H2O = GDP + phosphate + H(+). Functionally, involved in targeting and insertion of nascent membrane proteins into the cytoplasmic membrane. Binds to the hydrophobic signal sequence of the ribosome-nascent chain (RNC) as it emerges from the ribosomes. The SRP-RNC complex is then targeted to the cytoplasmic membrane where it interacts with the SRP receptor FtsY. Interaction with FtsY leads to the transfer of the RNC complex to the Sec translocase for insertion into the membrane, the hydrolysis of GTP by both Ffh and FtsY, and the dissociation of the SRP-FtsY complex into the individual components. The sequence is that of Signal recognition particle protein from Rickettsia bellii (strain RML369-C).